The primary structure comprises 120 residues: Glycine cleavage system H protein (120 aa).

A Lipoyl-binding domain is found at 17 to 99 (IATVGITSHA…QGAGWLYRMR (83 aa)). At lysine 58 the chain carries N6-lipoyllysine.

It belongs to the GcvH family. In terms of assembly, the glycine cleavage system is composed of four proteins: P, T, L and H. (R)-lipoate serves as cofactor.

In terms of biological role, the glycine cleavage system catalyzes the degradation of glycine. The H protein shuttles the methylamine group of glycine from the P protein to the T protein. This is Glycine cleavage system H protein from Methylobacterium nodulans (strain LMG 21967 / CNCM I-2342 / ORS 2060).